An 867-amino-acid chain; its full sequence is Armadillo repeat-containing protein 2 (867 aa).

Disordered stretches follow at residues 1 to 115 and 214 to 252; these read MLSP…CFSF and TSLPSHLKNGGDQGKRHARASSCPSSSDLSRLQTKAVPK. Polar residues-rich tracts occupy residues 18 to 28, 40 to 50, and 60 to 69; these read PSVSKQKTSAE, VRTQRPFTPQE, and SSRTSENRPP. 2 stretches are compositionally biased toward low complexity: residues 70-81 and 234-243; these read SSFSLHASSFES and SSCPSSSDLS. ARM repeat units lie at residues 262–301, 304–344, 363–403, 408–449, 462–503, 506–547, 551–589, 591–616, 619–662, 664–705, 707–746, and 748–790; these read IEVDEVFWNTRIVPILRELEKEENIETVCAACTQLHHALE, NMLG…ALKV, EKND…SIKF, LGFL…HLLV, SLVR…KLTS, DCCT…NLTA, QAREQFSKEKGSIQTLLSLFQTFHQLDLHSQKPVGQRGE, HRAQRPPSEAEDVLIKLTRVLANIAI, GVGP…NLSY, QVKN…NLSQ, HDVCDFIVQNNVHRFMMALLDAQHQDICFSACGVLLNLTV, and KDKR…NFSE.

In terms of tissue distribution, expressed at higher level in testis.

In terms of biological role, required for sperm flagellum axoneme organization and function. Involved in axonemal central pair complex assembly and/or stability. The sequence is that of Armadillo repeat-containing protein 2 from Homo sapiens (Human).